A 386-amino-acid polypeptide reads, in one-letter code: Succinate--CoA ligase [ADP-forming] subunit beta (386 aa).

Residues 9–244 (KAVLRSYGVS…LDEEDSKEIE (236 aa)) form the ATP-grasp domain. ATP is bound by residues lysine 46, 53-55 (GRG), glutamate 99, cysteine 102, and glutamate 107. The Mg(2+) site is built by asparagine 199 and aspartate 213. Substrate contacts are provided by residues asparagine 264 and 321-323 (GIM).

The protein belongs to the succinate/malate CoA ligase beta subunit family. Heterotetramer of two alpha and two beta subunits. Mg(2+) serves as cofactor.

The catalysed reaction is succinate + ATP + CoA = succinyl-CoA + ADP + phosphate. It catalyses the reaction GTP + succinate + CoA = succinyl-CoA + GDP + phosphate. It functions in the pathway carbohydrate metabolism; tricarboxylic acid cycle; succinate from succinyl-CoA (ligase route): step 1/1. In terms of biological role, succinyl-CoA synthetase functions in the citric acid cycle (TCA), coupling the hydrolysis of succinyl-CoA to the synthesis of either ATP or GTP and thus represents the only step of substrate-level phosphorylation in the TCA. The beta subunit provides nucleotide specificity of the enzyme and binds the substrate succinate, while the binding sites for coenzyme A and phosphate are found in the alpha subunit. In Bacillus cereus (strain G9842), this protein is Succinate--CoA ligase [ADP-forming] subunit beta.